The following is an 888-amino-acid chain: Prodigiosin synthesizing transferase PigC (888 aa).

The protein belongs to the PigC family.

The protein operates within antibiotic biosynthesis; prodigiosin biosynthesis. In terms of biological role, involved in the biosynthesis of 2-methyl-3-n-amyl-pyrrole (MAP), one of the terminal products involved in the biosynthesis of the red antibiotic prodigiosin (Pig). Catalyzes the transfer of 2-methyl-3-n-amyl-pyrrole (MAP) to 4-methoxy-2,2'-bipyrrole-5-carbaldehyde (MBC) to yield prodigiosin. It is able to use substrates with a variety of monocyclic rings in place of the pyrrolic ring A of its natural substrate. The sequence is that of Prodigiosin synthesizing transferase PigC from Serratia marcescens.